Reading from the N-terminus, the 232-residue chain is Protein FAM246B (232 aa).

Positions 19 to 31 (EVLRRVTGRRRDP) are enriched in basic and acidic residues. 4 disordered regions span residues 19-47 (EVLR…RAPG), 80-101 (AAGA…VCGE), 151-179 (ALLP…GPTL), and 191-232 (AASR…GGGD). Positions 211–220 (APARKNHKKM) are enriched in basic residues.

Belongs to the FAM246 family.

The sequence is that of Protein FAM246B from Homo sapiens (Human).